We begin with the raw amino-acid sequence, 394 residues long: MSKETFQRNKPHINIGTIGHVDHGKTTLTAAITRTLSGDGLADFRDYSSIDNTPEEKARGITINASHVEYETANRHYAHVDCPGHADYVKNMITGAAQMDGAILVVSATDGAMPQTKEHILLARQVGVPYIVVFLNKIDMISEEDAELVDLVEMELAELLEEKGYKGCPIIRGSALKALEGDAAYIEKVRELMQAVDDNIPTPEREIDKPFLMPIEDVFSISGRGTVVTGRIERGIVKVSDKVQLVGLRDTKETIVTGVEMFRKELPEGRAGENVGLLLRGIGKNDVERGMVVCLPNSVKPHTRFKCAVYVLQKEEGGRHKPFFTGYRPQFFFRTTDVTGVVTLPEGVEMVMPGDNVEFEVQLISPVALEEGMRFAIREGGRTIGAGTISKIIA.

One can recognise a tr-type G domain in the interval 10 to 204; the sequence is KPHINIGTIG…AVDDNIPTPE (195 aa). Positions 19 to 26 are G1; the sequence is GHVDHGKT. 19 to 26 serves as a coordination point for GTP; sequence GHVDHGKT. Thr-26 contributes to the Mg(2+) binding site. Residues 60–64 are G2; that stretch reads GITIN. A G3 region spans residues 81-84; sequence DCPG. GTP is bound by residues 81-85 and 136-139; these read DCPGH and NKID. Residues 136-139 are G4; that stretch reads NKID. Residues 174–176 are G5; that stretch reads SAL.

The protein belongs to the TRAFAC class translation factor GTPase superfamily. Classic translation factor GTPase family. EF-Tu/EF-1A subfamily. In terms of assembly, monomer.

Its subcellular location is the cytoplasm. It carries out the reaction GTP + H2O = GDP + phosphate + H(+). In terms of biological role, GTP hydrolase that promotes the GTP-dependent binding of aminoacyl-tRNA to the A-site of ribosomes during protein biosynthesis. The protein is Elongation factor Tu of Chlamydia trachomatis serovar L2 (strain ATCC VR-902B / DSM 19102 / 434/Bu).